A 673-amino-acid polypeptide reads, in one-letter code: Armadillo repeat-containing protein 8 (673 aa).

The residue at position 2 (A2) is an N-acetylalanine. ARM repeat units lie at residues 51–92 (NKQK…SLAM), 95–134 (ENNV…TIFT), 138–176 (TPEE…HCCK), 178–217 (PDHQ…VLAF), 224–265 (MTLV…YMCR), 269–309 (IRTD…YLIE), 313–352 (ELQR…HDLK), 374–413 (DIRK…SLSR), 416–455 (QQLR…NLLL), 458–497 (SPSK…NTAF), 501–540 (QKIK…NLLS), 543–585 (PHID…NIAD), 588–627 (TAKD…NLIW), and 634–673 (QERQ…QYLA). S337 carries the phosphoserine modification. A Phosphoserine modification is found at S512.

In terms of assembly, identified in the CTLH complex that contains GID4, RANBP9 and/or RANBP10, MKLN1, MAEA, RMND5A (or alternatively its paralog RMND5B), GID8, ARMC8, WDR26 and YPEL5. Within this complex, MAEA, RMND5A (or alternatively its paralog RMND5B), GID8, WDR26, and RANBP9 and/or RANBP10 form the catalytic core, while GID4, MKLN1, ARMC8 and YPEL5 have ancillary roles.

Its subcellular location is the nucleus. The protein resides in the cytoplasm. Its function is as follows. Component of the CTLH E3 ubiquitin-protein ligase complex that selectively accepts ubiquitin from UBE2H and mediates ubiquitination and subsequent proteasomal degradation of the transcription factor HBP1. The protein is Armadillo repeat-containing protein 8 (ARMC8) of Pongo abelii (Sumatran orangutan).